A 152-amino-acid chain; its full sequence is Transcriptional repressor NrdR (152 aa).

A zinc finger spans residues 3–34 (CPYCNASETKVIDSRLAAEGAQVRRRRSCNSC). In terms of domain architecture, ATP-cone spans 49 to 139 (PRIIKSSGKI…VYRDFQDIDA (91 aa)).

The protein belongs to the NrdR family. Zn(2+) is required as a cofactor.

Functionally, negatively regulates transcription of bacterial ribonucleotide reductase nrd genes and operons by binding to NrdR-boxes. The sequence is that of Transcriptional repressor NrdR from Psychrobacter cryohalolentis (strain ATCC BAA-1226 / DSM 17306 / VKM B-2378 / K5).